The sequence spans 86 residues: Exodeoxyribonuclease 7 small subunit (86 aa).

It belongs to the XseB family. Heterooligomer composed of large and small subunits.

Its subcellular location is the cytoplasm. The enzyme catalyses Exonucleolytic cleavage in either 5'- to 3'- or 3'- to 5'-direction to yield nucleoside 5'-phosphates.. Functionally, bidirectionally degrades single-stranded DNA into large acid-insoluble oligonucleotides, which are then degraded further into small acid-soluble oligonucleotides. The protein is Exodeoxyribonuclease 7 small subunit of Xanthomonas euvesicatoria pv. vesicatoria (strain 85-10) (Xanthomonas campestris pv. vesicatoria).